Here is a 476-residue protein sequence, read N- to C-terminus: UDP-N-acetylmuramate--L-alanine ligase (476 aa).

Position 121-127 (121-127 (GAHGKTT)) interacts with ATP.

This sequence belongs to the MurCDEF family.

Its subcellular location is the cytoplasm. The catalysed reaction is UDP-N-acetyl-alpha-D-muramate + L-alanine + ATP = UDP-N-acetyl-alpha-D-muramoyl-L-alanine + ADP + phosphate + H(+). It functions in the pathway cell wall biogenesis; peptidoglycan biosynthesis. In terms of biological role, cell wall formation. This Clavibacter sepedonicus (Clavibacter michiganensis subsp. sepedonicus) protein is UDP-N-acetylmuramate--L-alanine ligase.